We begin with the raw amino-acid sequence, 214 residues long: Cytochrome b (214 aa).

4 consecutive transmembrane segments (helical) span residues 31 to 51 (FGSM…FLAF), 75 to 96 (WIMQ…YIHI), 111 to 131 (WVSG…GYVL), and 176 to 196 (FFAL…IHIL). The heme b site is built by His81 and His95. The heme b site is built by His180 and His194. His199 is a binding site for a ubiquinone.

This sequence belongs to the cytochrome b family. As to quaternary structure, the cytochrome bc1 complex contains 3 respiratory subunits (MT-CYB, CYC1 and UQCRFS1), 2 core proteins (UQCRC1 and UQCRC2) and probably 6 low-molecular weight proteins. It depends on heme b as a cofactor.

It localises to the mitochondrion inner membrane. Functionally, component of the ubiquinol-cytochrome c reductase complex (complex III or cytochrome b-c1 complex) that is part of the mitochondrial respiratory chain. The b-c1 complex mediates electron transfer from ubiquinol to cytochrome c. Contributes to the generation of a proton gradient across the mitochondrial membrane that is then used for ATP synthesis. This Gloydius blomhoffii (Mamushi) protein is Cytochrome b (MT-CYB).